The sequence spans 262 residues: Chondroitin proteoglycan 3 (262 aa).

Residues 1–17 form the signal peptide; it reads MRSSFIFALLLIGAALA. A disordered region spans residues 37–68; it reads FSGEASGEASGEASGEFSGEGSGEGSGELSPE. The segment covering 39 to 53 has biased composition (low complexity); that stretch reads GEASGEASGEASGEF. Asn-140, Asn-148, and Asn-224 each carry an N-linked (GlcNAc...) asparagine glycan.

The protein is Chondroitin proteoglycan 3 (cpg-3) of Caenorhabditis briggsae.